The primary structure comprises 297 residues: Ribonuclease HIII (297 aa).

In terms of domain architecture, RNase H type-2 spans 81–297; it reads IPIIGTDEVG…NTKKAQALLK (217 aa). 3 residues coordinate a divalent metal cation: aspartate 87, glutamate 88, and aspartate 192.

This sequence belongs to the RNase HII family. RnhC subfamily. The cofactor is Mn(2+). Mg(2+) is required as a cofactor.

Its subcellular location is the cytoplasm. It carries out the reaction Endonucleolytic cleavage to 5'-phosphomonoester.. In terms of biological role, endonuclease that specifically degrades the RNA of RNA-DNA hybrids. The chain is Ribonuclease HIII from Streptococcus agalactiae serotype Ia (strain ATCC 27591 / A909 / CDC SS700).